We begin with the raw amino-acid sequence, 1196 residues long: MPGKLVGSSEEAARTGTQANAHAEDHSDLEHSAPSTDDGFDEPKPPIAKSVPPSTAIPKKNNFKQRGNTKNVKPPTLEEMKELRDTQNLFHSNLFKLQVKEMLEELQLKQKYTDFIENWLESFTVFTRQLKDGLMERTHLEVPMKLSEKPTGFVFSKPTREPYLIGAAATGTLLGPKIVVDVALEMPKESLHKEDYLNLRYDQKRALYLTYVTERMMESPDYAQDQFNFNYYANNPLKPVLELIPVTKQVNKHLQVRLFITAPLSSFKPGRFVPWNNNIRPSFYGDEWDEQDPLPSTQHYNANVLFDLTLSENQAQLDKAFKSRRNFQDGLLLLKVWLRQRQLDIGYSGFGAHILAAFIVYLNKQRILHQSSSSYQVARTVWNQLANTDWTKGISLAVDPIQTEELNKFAEHYDVCFIDFTGQHNLCANIPLYLYKRVREEAKLAVELLNDMKLNSFPLIFMQKCPLYSRVDNILKISNYSCINQMLTLHSQPRIKYDFANYGYPQLLHLLTELLKKGLAERVHSILPLETATAAWPVENKAPVIGKYIQLGLILQPEHAYEVLNKGPAANDDLAGAEEFRRFWGEKSNLRRFQDGSITEAVVWGTAQDSPAKKRLIVRHVVLHLLEHHLQLDSKEVQYIGGELDQVYKLSPWFKVNKLKTKLSLDQDTDAEALSPHVIRCYDELARQLHGLNDLPLEIVSISGVSPIFRYCEPQPVLPQALLVENRILASTIQRVVIQLGQSGKWPTELGALRALKTAFLIEIGEKLEAQCRLHWVISADGLLVLKQGYCFLIELAHNKELALLKQEVTERGITTYVDNAASRFLERQHYILPKVSGALHSLHQTYSAFGSTVLLAKRWLATQLLDDGLWPDMATELLVAHLFQQRYAPQSIAAPQTGFIRFLQLLSHSDFNGELFLLNFNNSWQEQQIADLEHNYRSNRQSYPPLAVATSYDMQHAGRLWTSDQSPSQRVLGHVTRLARRALEIIETSLMSKDLRFVRPAQLFRASNEGYDLVIQFKPDLVPNSLSYDLGSPFVSFSQPNFSLPRAGSDYIARIVGLLRSAYSDFAAFFYNPHGGKELAIVWRPTTEFAAKPFKVTELQACRPCGNGKVQVLKETLLEDFKLLLKDFYLRIATPEELKREQREHQKPMRYFEANQAVEESKPKPKKHRKRKGTGKEAPPKKKRLIKSSTLKALK.

Disordered stretches follow at residues 1–75 (MPGK…VKPP) and 1140–1196 (KREQ…KALK). Residues 22-31 (HAEDHSDLEH) are compositionally biased toward basic and acidic residues. A compositionally biased stretch (basic residues) spans 1165-1174 (KPKKHRKRKG).

The protein belongs to the NRAP family. Part of the small subunit (SSU) processome, composed of more than 70 proteins and the RNA chaperone small nucleolar RNA (snoRNA) U3.

It is found in the nucleus. Its subcellular location is the nucleolus. The protein localises to the chromosome. In terms of biological role, part of the small subunit (SSU) processome, first precursor of the small eukaryotic ribosomal subunit. During the assembly of the SSU processome in the nucleolus, many ribosome biogenesis factors, an RNA chaperone and ribosomal proteins associate with the nascent pre-rRNA and work in concert to generate RNA folding, modifications, rearrangements and cleavage as well as targeted degradation of pre-ribosomal RNA by the RNA exosome. The chain is Nucleolar protein 6 from Drosophila sechellia (Fruit fly).